Here is a 101-residue protein sequence, read N- to C-terminus: Gibberellin-regulated protein 6 (101 aa).

Positions 1 to 23 (MAKLITSFLLLTILFTFVCLTMS) are cleaved as a signal peptide.

Belongs to the GASA family. Post-translationally, six disulfide bonds may be present.

The protein localises to the secreted. Functionally, gibberellin-regulated protein that may function in hormonal controlled steps of development such as seed germination, flowering and seed maturation. In Arabidopsis thaliana (Mouse-ear cress), this protein is Gibberellin-regulated protein 6 (GASA6).